A 204-amino-acid chain; its full sequence is Thiamine-phosphate synthase (204 aa).

4-amino-2-methyl-5-(diphosphooxymethyl)pyrimidine-binding positions include 32-36 and Asp-64; that span reads QLRMK. Mg(2+) is bound by residues Asp-65 and Asp-84. Thr-103 serves as a coordination point for 4-amino-2-methyl-5-(diphosphooxymethyl)pyrimidine. 129 to 131 is a binding site for 2-[(2R,5Z)-2-carboxy-4-methylthiazol-5(2H)-ylidene]ethyl phosphate; it reads TTT. Lys-132 contacts 4-amino-2-methyl-5-(diphosphooxymethyl)pyrimidine. Gly-165 serves as a coordination point for 2-[(2R,5Z)-2-carboxy-4-methylthiazol-5(2H)-ylidene]ethyl phosphate.

Belongs to the thiamine-phosphate synthase family. Requires Mg(2+) as cofactor.

The catalysed reaction is 2-[(2R,5Z)-2-carboxy-4-methylthiazol-5(2H)-ylidene]ethyl phosphate + 4-amino-2-methyl-5-(diphosphooxymethyl)pyrimidine + 2 H(+) = thiamine phosphate + CO2 + diphosphate. It carries out the reaction 2-(2-carboxy-4-methylthiazol-5-yl)ethyl phosphate + 4-amino-2-methyl-5-(diphosphooxymethyl)pyrimidine + 2 H(+) = thiamine phosphate + CO2 + diphosphate. The enzyme catalyses 4-methyl-5-(2-phosphooxyethyl)-thiazole + 4-amino-2-methyl-5-(diphosphooxymethyl)pyrimidine + H(+) = thiamine phosphate + diphosphate. It participates in cofactor biosynthesis; thiamine diphosphate biosynthesis; thiamine phosphate from 4-amino-2-methyl-5-diphosphomethylpyrimidine and 4-methyl-5-(2-phosphoethyl)-thiazole: step 1/1. Condenses 4-methyl-5-(beta-hydroxyethyl)thiazole monophosphate (THZ-P) and 2-methyl-4-amino-5-hydroxymethyl pyrimidine pyrophosphate (HMP-PP) to form thiamine monophosphate (TMP). The chain is Thiamine-phosphate synthase from Bacteroides fragilis (strain YCH46).